Consider the following 207-residue polypeptide: Large ribosomal subunit protein uL4 (207 aa).

Residues 48–89 are disordered; that stretch reads THKVKNRSEVSGGGRKPWRQKGTGRARQGSIRSPQWRGGGTV.

It belongs to the universal ribosomal protein uL4 family. In terms of assembly, part of the 50S ribosomal subunit.

Functionally, one of the primary rRNA binding proteins, this protein initially binds near the 5'-end of the 23S rRNA. It is important during the early stages of 50S assembly. It makes multiple contacts with different domains of the 23S rRNA in the assembled 50S subunit and ribosome. Forms part of the polypeptide exit tunnel. This is Large ribosomal subunit protein uL4 from Bacillus cytotoxicus (strain DSM 22905 / CIP 110041 / 391-98 / NVH 391-98).